The following is a 56-amino-acid chain: Large ribosomal subunit protein bL32 (56 aa).

Residues 1-26 (MAVQQNKKSRSKRGMRRSHDALSTAQ) form a disordered region. Residues 7–16 (KKSRSKRGMR) show a composition bias toward basic residues.

The protein belongs to the bacterial ribosomal protein bL32 family.

This chain is Large ribosomal subunit protein bL32, found in Shewanella amazonensis (strain ATCC BAA-1098 / SB2B).